The primary structure comprises 307 residues: Malonyl-[acyl-carrier protein] O-methyltransferase (307 aa).

It belongs to the methyltransferase superfamily.

It carries out the reaction malonyl-[ACP] + S-adenosyl-L-methionine = malonyl-[ACP] methyl ester + S-adenosyl-L-homocysteine. It participates in cofactor biosynthesis; biotin biosynthesis. Converts the free carboxyl group of a malonyl-thioester to its methyl ester by transfer of a methyl group from S-adenosyl-L-methionine (SAM). It allows to synthesize pimeloyl-ACP via the fatty acid synthetic pathway. The polypeptide is Malonyl-[acyl-carrier protein] O-methyltransferase (Nitrosospira multiformis (strain ATCC 25196 / NCIMB 11849 / C 71)).